The sequence spans 185 residues: Large ribosomal subunit protein uL5 (185 aa).

The protein belongs to the universal ribosomal protein uL5 family. Part of the 50S ribosomal subunit; part of the 5S rRNA/L5/L18/L25 subcomplex. Contacts the 5S rRNA and the P site tRNA. Forms a bridge to the 30S subunit in the 70S ribosome.

Its function is as follows. This is one of the proteins that bind and probably mediate the attachment of the 5S RNA into the large ribosomal subunit, where it forms part of the central protuberance. In the 70S ribosome it contacts protein S13 of the 30S subunit (bridge B1b), connecting the 2 subunits; this bridge is implicated in subunit movement. Contacts the P site tRNA; the 5S rRNA and some of its associated proteins might help stabilize positioning of ribosome-bound tRNAs. The sequence is that of Large ribosomal subunit protein uL5 from Parabacteroides distasonis (strain ATCC 8503 / DSM 20701 / CIP 104284 / JCM 5825 / NCTC 11152).